Consider the following 355-residue polypeptide: F-box protein At1g31080 (355 aa).

The F-box domain maps to 4 to 49 (GANSASIPNDLILEILSRLPAKSTGRFRCVSKLWGSMLCHSYFTEL). A compositionally biased stretch (polar residues) spans 306-320 (AGTSRSPPKQSTSTS). The tract at residues 306-333 (AGTSRSPPKQSTSTSSREDHEVRTLAHQ) is disordered. Basic and acidic residues predominate over residues 321-333 (SREDHEVRTLAHQ).

The protein is F-box protein At1g31080 of Arabidopsis thaliana (Mouse-ear cress).